Consider the following 188-residue polypeptide: Chitin synthase 2 (188 aa).

This sequence belongs to the chitin synthase family.

It localises to the cell membrane. It carries out the reaction [(1-&gt;4)-N-acetyl-beta-D-glucosaminyl](n) + UDP-N-acetyl-alpha-D-glucosamine = [(1-&gt;4)-N-acetyl-beta-D-glucosaminyl](n+1) + UDP + H(+). Its function is as follows. Polymerizes chitin, a structural polymer of the cell wall and septum, by transferring the sugar moiety of UDP-GlcNAc to the non-reducing end of the growing chitin polymer. This chain is Chitin synthase 2 (CHS2), found in Exophiala jeanselmei (Dematiaceous fungus).